The chain runs to 418 residues: Protein-lysine N-trimethyltransferase SMYD5 (418 aa).

In terms of domain architecture, SET spans 21 to 352 (VSVEVRFVSS…PGEEICISYL (332 aa)). An MYND-type zinc finger spans residues 98-136 (PELCTVRKDLHQNCPHCQVMYCSAECRLAATEQYHQVLC). Tyrosine 351 is an S-adenosyl-L-methionine binding site. The tract at residues 385-418 (ADEPNVTSEEEEEEEEEEEGEPEDAELGDEMTDV) is disordered.

Belongs to the class V-like SAM-binding methyltransferase superfamily. As to quaternary structure, interacts with the N-CoR complex. Interacts with EHMT2 and CBX5. Ubiquitinated and degradaed by the proteasome in response to mild hypothermia (32 degrees Celsius), relieving repression of the SP1 gene.

The protein resides in the cytoplasm. It catalyses the reaction L-lysyl-[protein] + 3 S-adenosyl-L-methionine = N(6),N(6),N(6)-trimethyl-L-lysyl-[protein] + 3 S-adenosyl-L-homocysteine + 3 H(+). It carries out the reaction L-lysyl(20)-[histone H4] + 3 S-adenosyl-L-methionine = N(6),N(6),N(6)-trimethyl-L-lysyl(20)-[histone H4] + 3 S-adenosyl-L-homocysteine + 3 H(+). The enzyme catalyses L-lysyl(36)-[histone H3] + 3 S-adenosyl-L-methionine = N(6),N(6),N(6)-trimethyl-L-lysyl(36)-[histone H3] + 3 S-adenosyl-L-homocysteine + 3 H(+). Protein-lysine N-trimethyltransferase that specifically catalyzes trimethylation of 'Lys-22' of the RPL40/eL40 subunit of the 60S ribosome, thereby promoting translation elongation and protein synthesis. May also act as a histone methyltransferase in the context of histone octamers, but not on nucleosome substrates: trimethylates 'Lys-36' of histone H3 and 'Lys-20' of histone H4 to form H3K36me3 and H4K20me3, respectively. The histone methyltransferase activity, which is independent of its SET domain, is however unsure in vivo. In association with the NCoR corepressor complex, involved in the repression of toll-like receptor 4 (TLR4)-target inflammatory genes in macrophages, possibly by catalyzing the formation of H4K20me3 at the gene promoters. Plays an important role in embryonic stem (ES) cell self-renewal and differentiation. Maintains genome stability of ES cells during differentiation through regulation of heterochromatin formation and repression of endogenous repetitive DNA elements by promoting H4K20me3 marks. Acts as a regulator of the hypothermia response: its degradation in response to mild hypothermia relieves the formation of H3K36me3 at gene promoters, allowing expression of the neuroprotective gene SP1. The polypeptide is Protein-lysine N-trimethyltransferase SMYD5 (Homo sapiens (Human)).